The following is a 431-amino-acid chain: MLDPKYLRSEIDEAAARLATRGYVLDVAAVNALEEKRKDLQSRTQELQAERNARSKSIGEAARRGEDVAPLKAEVTKINDELETSKIELDALLTEIKSISDAIPNLPSETTPVGRDENDNVEVRRWGTPRQFTFPVRDHIDLGEAAKGVDFKNGVKLSGARFVVMKGQIARLHRALAQFMLDLHTLQHGYTECYVPYLVNPDSLYGTGQLPKFSQDLFNTGIEGEGEDEGKMRKFSLIPTSEVPLTNMARDEIFDEQELPIKMTAHSPCFRSEAGSYGRDTRGLIRMHQFDKVEMVQLVHPEKSWEALEEMAGHAEKVLQLLELPYRVMALATGDMGFCAAKTYDLEVWLPAQNTYREISSVSNCTDFQARRMQARVRIDGKPQLLHTLNGSGLAVGRTLVAVIENYQQEDGRIAIPAALQSYMGGLTHIG.

Positions 41-66 (QSRTQELQAERNARSKSIGEAARRGE) are disordered. 240–242 (TSE) provides a ligand contact to L-serine. ATP is bound at residue 271 to 273 (RSE). Glu-294 is a binding site for L-serine. An ATP-binding site is contributed by 358–361 (EISS). Ser-392 lines the L-serine pocket.

This sequence belongs to the class-II aminoacyl-tRNA synthetase family. Type-1 seryl-tRNA synthetase subfamily. Homodimer. The tRNA molecule binds across the dimer.

Its subcellular location is the cytoplasm. The enzyme catalyses tRNA(Ser) + L-serine + ATP = L-seryl-tRNA(Ser) + AMP + diphosphate + H(+). It carries out the reaction tRNA(Sec) + L-serine + ATP = L-seryl-tRNA(Sec) + AMP + diphosphate + H(+). The protein operates within aminoacyl-tRNA biosynthesis; selenocysteinyl-tRNA(Sec) biosynthesis; L-seryl-tRNA(Sec) from L-serine and tRNA(Sec): step 1/1. In terms of biological role, catalyzes the attachment of serine to tRNA(Ser). Is also able to aminoacylate tRNA(Sec) with serine, to form the misacylated tRNA L-seryl-tRNA(Sec), which will be further converted into selenocysteinyl-tRNA(Sec). This Aeromonas salmonicida (strain A449) protein is Serine--tRNA ligase.